Here is a 124-residue protein sequence, read N- to C-terminus: MaFF-interacting protein (124 aa).

Residues 54-96 adopt a coiled-coil conformation; it reads LVSEVEELYKSITALREKLLQAEQSLRNLKDIHMSLEKDVTAM.

Belongs to the tektin family. Interacts with MIS18A. Interacts (via its coiled-coil region) with MAFF. Strongly expressed in brain, kidney and ovary. Moderately expressed in liver, spleen, thymus, prostate, testis, small intestine and colon. Weakly expressed in heart, placenta, lung and leukocytes.

The protein resides in the cytoplasm. The protein localises to the nucleus. It localises to the nucleolus. Acts as a coactivator of MAFF transcriptional activity. Inhibits cell growth and colony-forming efficiency. The polypeptide is MaFF-interacting protein (MAFIP) (Homo sapiens (Human)).